The primary structure comprises 208 residues: Small ribosomal subunit protein uS4 (208 aa).

An S4 RNA-binding domain is found at 97 to 160; the sequence is TRLDNVCYRM…QKQLRVQEAL (64 aa).

Belongs to the universal ribosomal protein uS4 family. As to quaternary structure, part of the 30S ribosomal subunit. Contacts protein S5. The interaction surface between S4 and S5 is involved in control of translational fidelity.

In terms of biological role, one of the primary rRNA binding proteins, it binds directly to 16S rRNA where it nucleates assembly of the body of the 30S subunit. With S5 and S12 plays an important role in translational accuracy. The polypeptide is Small ribosomal subunit protein uS4 (Xanthomonas oryzae pv. oryzae (strain MAFF 311018)).